Consider the following 231-residue polypeptide: Cytidylate kinase (231 aa).

Residue 17–25 (GPTASGKGT) coordinates ATP.

The protein belongs to the cytidylate kinase family. Type 1 subfamily.

The protein localises to the cytoplasm. The catalysed reaction is CMP + ATP = CDP + ADP. It catalyses the reaction dCMP + ATP = dCDP + ADP. This chain is Cytidylate kinase, found in Ralstonia pickettii (strain 12J).